The following is a 327-amino-acid chain: MTTQQIVLQGPGPWGFRLVGGKDFEQPLAISRVTPGSKAAIANLCIGDLITAIDGEDTSSMTHLEAQNKIKGCVDNMTLTVSRSEQKIWSPLVTEEGKRHPYKMNLASEPQEVLHIGSAHNRSAMPFTASPAPGTRVITNQYNSPTGLYSSENISNFNNAVESKTSASGEEANSRPSAQPHPSGGLIIDKESEVYKMLQEKQELNEPPKQSTSFLVLQEILESDGKGDPNKPSGFRSVKAPVTKVAASVGNAQKLPICDKCGTGIVGVFVKLRDHHRHPECYVCTDCGINLKQKGHFFVGDQIYCEKHARERVTPPEGYDVVTVFPK.

The residue at position 2 (T2) is an N-acetylthreonine. One can recognise a PDZ domain in the interval 3–85 (TQQIVLQGPG…NMTLTVSRSE (83 aa)). A phosphoserine mark is found at S90 and S130. A Phosphotyrosine modification is found at Y142. The disordered stretch occupies residues 161 to 186 (VESKTSASGEEANSRPSAQPHPSGGL). The region spanning 256–315 (PICDKCGTGIVGVFVKLRDHHRHPECYVCTDCGINLKQKGHFFVGDQIYCEKHARERVTP) is the LIM zinc-binding domain. Zn(2+)-binding residues include C258, C261, H278, C281, C284, C287, C305, and H308. At T314 the chain carries Phosphothreonine. Y319 bears the Phosphotyrosine mark.

In terms of assembly, interacts with ACTN1. Interacts with ACTN2 and ACTN4. Interacts with PDLIM4. As to expression, expressed most abundantly in heart, lung and liver, moderately in spleen and skeletal muscle, and at extremely low levels (if at all) in testis and brain tissues.

The protein resides in the cytoplasm. It localises to the cytoskeleton. Its subcellular location is the myofibril. The protein localises to the sarcomere. It is found in the z line. Cytoskeletal protein that may act as an adapter that brings other proteins (like kinases) to the cytoskeleton. Involved in assembly, disassembly and directioning of stress fibers in fibroblasts. Required for the localization of ACTN1 and PALLD to stress fibers. Required for cell migration and in maintaining cell polarity of fibroblasts. The sequence is that of PDZ and LIM domain protein 1 (Pdlim1) from Rattus norvegicus (Rat).